Consider the following 554-residue polypeptide: Folate synthesis bifunctional protein, mitochondrial (554 aa).

A mitochondrion-targeting transit peptide spans 1–42; it reads MAPLLSQTLIHTGRFLLRRFLEPPPAVISAVAASRVCFHRYY. The interval 90 to 215 is HPPK; the sequence is VIALGSNIGN…SFVLAPLVDL (126 aa). The region spanning 273 to 541 is the Pterin-binding domain; the sequence is THVMGILNLT…NVRHNADAAK (269 aa). The DHPS stretch occupies residues 275–554; it reads VMGILNLTPD…AMLRRRRSKG (280 aa). Mg(2+) is bound at residue Asn-280. Residues Thr-320, Asp-357, Asn-376, Asp-449, Lys-494, and 529–531 each bind (7,8-dihydropterin-6-yl)methyl diphosphate; that span reads RVH.

It in the N-terminal section; belongs to the HPPK family. In the C-terminal section; belongs to the DHPS family. Mg(2+) is required as a cofactor. In terms of tissue distribution, ubiquitous.

Its subcellular location is the mitochondrion. It carries out the reaction 6-hydroxymethyl-7,8-dihydropterin + ATP = (7,8-dihydropterin-6-yl)methyl diphosphate + AMP + H(+). The catalysed reaction is (7,8-dihydropterin-6-yl)methyl diphosphate + 4-aminobenzoate = 7,8-dihydropteroate + diphosphate. Its pathway is cofactor biosynthesis; tetrahydrofolate biosynthesis; 2-amino-4-hydroxy-6-hydroxymethyl-7,8-dihydropteridine diphosphate from 7,8-dihydroneopterin triphosphate: step 4/4. It participates in cofactor biosynthesis; tetrahydrofolate biosynthesis; 7,8-dihydrofolate from 2-amino-4-hydroxy-6-hydroxymethyl-7,8-dihydropteridine diphosphate and 4-aminobenzoate: step 1/2. Functionally, catalyzes the first two consecutive steps of tetrahydrofolate biosynthesis. This is Folate synthesis bifunctional protein, mitochondrial from Arabidopsis thaliana (Mouse-ear cress).